The sequence spans 133 residues: MIVGLGNDLVDIRRIERMLVRYGERFIQRIFTDIERNRSENLKKNSSSYAKRFAAKEACAKALGTGIACGINWKDMGVVNLSSGKPIMQLTNHAQVQLQKLLPPHHDAIIHLSITDDFPWAQAFVIIEALPRG.

Positions 8 and 57 each coordinate Mg(2+).

It belongs to the P-Pant transferase superfamily. AcpS family. Requires Mg(2+) as cofactor.

Its subcellular location is the cytoplasm. It carries out the reaction apo-[ACP] + CoA = holo-[ACP] + adenosine 3',5'-bisphosphate + H(+). In terms of biological role, transfers the 4'-phosphopantetheine moiety from coenzyme A to a Ser of acyl-carrier-protein. This chain is Holo-[acyl-carrier-protein] synthase, found in Bartonella tribocorum (strain CIP 105476 / IBS 506).